The primary structure comprises 159 residues: Urease accessory protein UreE (159 aa).

Residues 140–159 (GAYHGTGHHHHGHGHDPHHG) are disordered.

Belongs to the UreE family.

Its subcellular location is the cytoplasm. Involved in urease metallocenter assembly. Binds nickel. Probably functions as a nickel donor during metallocenter assembly. The polypeptide is Urease accessory protein UreE (Sinorhizobium fredii (strain NBRC 101917 / NGR234)).